The following is an 891-amino-acid chain: Translation initiation factor IF-2 (891 aa).

The 170-residue stretch at 390 to 559 folds into the tr-type G domain; sequence NRAPIVTIMG…LLQSDMLELK (170 aa). A G1 region spans residues 399 to 406; sequence GHVDHGKT. 399-406 lines the GTP pocket; sequence GHVDHGKT. Positions 424 to 428 are G2; it reads GITQS. Residues 445 to 448 are G3; sequence DTPG. GTP-binding positions include 445–449 and 499–502; these read DTPGH and NKID. Residues 499 to 502 are G4; that stretch reads NKID. Residues 535-537 are G5; sequence SAT.

The protein belongs to the TRAFAC class translation factor GTPase superfamily. Classic translation factor GTPase family. IF-2 subfamily.

Its subcellular location is the cytoplasm. Its function is as follows. One of the essential components for the initiation of protein synthesis. Protects formylmethionyl-tRNA from spontaneous hydrolysis and promotes its binding to the 30S ribosomal subunits. Also involved in the hydrolysis of GTP during the formation of the 70S ribosomal complex. This Blochmanniella pennsylvanica (strain BPEN) protein is Translation initiation factor IF-2.